A 72-amino-acid polypeptide reads, in one-letter code: Putative D-serine transporter DsdX-like protein (72 aa).

The chain is Putative D-serine transporter DsdX-like protein (dsdX) from Escherichia coli O157:H7.